Reading from the N-terminus, the 67-residue chain is Phycobilisome 7.8 kDa linker polypeptide, allophycocyanin-associated, core (67 aa).

A CpcD-like domain is found at 1–56 (MRMFRITACVPSQTRIRTQRELQNTYFTKLVPYDNWFREQQRIMKMGGKIVKVELA).

The protein belongs to the phycobilisome linker protein family.

It is found in the cellular thylakoid membrane. Its function is as follows. Rod linker protein, associated with allophycocyanin. Linker polypeptides determine the state of aggregation and the location of the disk-shaped phycobiliprotein units within the phycobilisome and modulate their spectroscopic properties in order to mediate a directed and optimal energy transfer. The chain is Phycobilisome 7.8 kDa linker polypeptide, allophycocyanin-associated, core (apcC) from Synechocystis sp. (strain PCC 6714) (Aphanocapsa sp. (strain PCC 6714)).